A 175-amino-acid polypeptide reads, in one-letter code: uncharacterized protein (175 aa).

Residues 1-173 enclose the Macro domain; it reads MYKNIIKLIS…VYKEKYKKLL (173 aa).

This sequence belongs to the MacroD-type family.

This is an uncharacterized protein from Fusobacterium nucleatum subsp. nucleatum (strain ATCC 25586 / DSM 15643 / BCRC 10681 / CIP 101130 / JCM 8532 / KCTC 2640 / LMG 13131 / VPI 4355).